Consider the following 123-residue polypeptide: S-adenosylmethionine decarboxylase proenzyme 2 (123 aa).

The active-site Schiff-base intermediate with substrate; via pyruvic acid is the Ser65. At Ser65 the chain carries Pyruvic acid (Ser); by autocatalysis. Residue His70 is the Proton acceptor; for processing activity of the active site. Residue Cys85 is the Proton donor; for catalytic activity of the active site.

It belongs to the prokaryotic AdoMetDC family. Type 1 subfamily. Heterotetramer of two alpha and two beta chains arranged as a dimer of alpha/beta heterodimers. Pyruvate is required as a cofactor. Is synthesized initially as an inactive proenzyme. Formation of the active enzyme involves a self-maturation process in which the active site pyruvoyl group is generated from an internal serine residue via an autocatalytic post-translational modification. Two non-identical subunits are generated from the proenzyme in this reaction, and the pyruvate is formed at the N-terminus of the alpha chain, which is derived from the carboxyl end of the proenzyme. The post-translation cleavage follows an unusual pathway, termed non-hydrolytic serinolysis, in which the side chain hydroxyl group of the serine supplies its oxygen atom to form the C-terminus of the beta chain, while the remainder of the serine residue undergoes an oxidative deamination to produce ammonia and the pyruvoyl group blocking the N-terminus of the alpha chain.

It carries out the reaction S-adenosyl-L-methionine + H(+) = S-adenosyl 3-(methylsulfanyl)propylamine + CO2. The protein operates within amine and polyamine biosynthesis; S-adenosylmethioninamine biosynthesis; S-adenosylmethioninamine from S-adenosyl-L-methionine: step 1/1. Functionally, catalyzes the decarboxylation of S-adenosylmethionine to S-adenosylmethioninamine (dcAdoMet), the propylamine donor required for the synthesis of the polyamines spermine and spermidine from the diamine putrescine. This is S-adenosylmethionine decarboxylase proenzyme 2 from Bacillus anthracis.